The following is a 105-amino-acid chain: Prokineticin-1 (105 aa).

Positions 1–19 are cleaved as a signal peptide; the sequence is MRGAVQVFIMLLLATVSDC. Cystine bridges form between cysteine 26/cysteine 38, cysteine 32/cysteine 50, cysteine 37/cysteine 78, cysteine 60/cysteine 86, and cysteine 80/cysteine 96.

This sequence belongs to the AVIT (prokineticin) family.

It is found in the secreted. Functionally, potently contracts gastrointestinal (GI) smooth muscle. Induces proliferation, migration and fenestration (the formation of membrane discontinuities) in capillary endothelial cells derived from endocrine glands. Has little or no effect on a variety of other endothelial and non-endothelial cell types. Induces proliferation and differentiation, but not migration, of enteric neural crest cells. Directly influences neuroblastoma progression by promoting the proliferation and migration of neuroblastoma cells. Positively regulates PTGS2 expression and prostaglandin synthesis. May play a role in placentation. May play a role in normal and pathological testis angiogenesis. The protein is Prokineticin-1 (Prok1) of Rattus norvegicus (Rat).